A 271-amino-acid chain; its full sequence is Digeranylgeranylglyceryl phosphate synthase (271 aa).

The next 8 membrane-spanning stretches (helical) occupy residues 11–31 (INCA…GARL), 33–53 (VGAV…NAIN), 88–108 (FAVG…IAAL), 125–145 (LIGN…GAAV), 149–169 (PAPA…REIL), 201–221 (VFAI…VVGW), 224–244 (LVLA…AVAG), and 251–271 (AQRV…ASLL).

Belongs to the UbiA prenyltransferase family. DGGGP synthase subfamily. Requires Mg(2+) as cofactor.

The protein localises to the cell membrane. The catalysed reaction is sn-3-O-(geranylgeranyl)glycerol 1-phosphate + (2E,6E,10E)-geranylgeranyl diphosphate = 2,3-bis-O-(geranylgeranyl)-sn-glycerol 1-phosphate + diphosphate. It functions in the pathway membrane lipid metabolism; glycerophospholipid metabolism. In terms of biological role, prenyltransferase that catalyzes the transfer of the geranylgeranyl moiety of geranylgeranyl diphosphate (GGPP) to the C2 hydroxyl of (S)-3-O-geranylgeranylglyceryl phosphate (GGGP). This reaction is the second ether-bond-formation step in the biosynthesis of archaeal membrane lipids. This is Digeranylgeranylglyceryl phosphate synthase from Methanopyrus kandleri (strain AV19 / DSM 6324 / JCM 9639 / NBRC 100938).